Consider the following 493-residue polypeptide: Cell division protein FtsA (493 aa).

The disordered stretch occupies residues 434 to 468; that stretch reads AHQSNPTPHIHSSPTERNLSDLKTPSAPLNTAKND. Residues 436–465 show a composition bias toward polar residues; sequence QSNPTPHIHSSPTERNLSDLKTPSAPLNTA.

Belongs to the FtsA/MreB family. In terms of assembly, self-interacts. Interacts with FtsZ.

The protein localises to the cell inner membrane. Its function is as follows. Cell division protein that is involved in the assembly of the Z ring. May serve as a membrane anchor for the Z ring. The chain is Cell division protein FtsA from Helicobacter pylori (strain J99 / ATCC 700824) (Campylobacter pylori J99).